A 287-amino-acid polypeptide reads, in one-letter code: Probable endonuclease 4 (287 aa).

Zn(2+) contacts are provided by His-69, His-109, Glu-144, Asp-178, His-181, His-215, Asp-228, His-230, and Glu-260.

The protein belongs to the AP endonuclease 2 family. It depends on Zn(2+) as a cofactor.

The catalysed reaction is Endonucleolytic cleavage to 5'-phosphooligonucleotide end-products.. Endonuclease IV plays a role in DNA repair. It cleaves phosphodiester bonds at apurinic or apyrimidinic (AP) sites, generating a 3'-hydroxyl group and a 5'-terminal sugar phosphate. The chain is Probable endonuclease 4 from Thermotoga petrophila (strain ATCC BAA-488 / DSM 13995 / JCM 10881 / RKU-1).